Consider the following 272-residue polypeptide: Aquaporin FA-CHIP (272 aa).

The Cytoplasmic portion of the chain corresponds to 1-17; it reads MASEFKKKAFWRAVIAE. The helical transmembrane segment at 18 to 35 threads the bilayer; the sequence is FLAMILFVFISIGAALGF. At 36–52 the chain is on the extracellular side; it reads NFPIEEKANQTVGRSQD. N-linked (GlcNAc...) asparagine glycosylation is present at Asn-44. Residues 53–71 form a helical membrane-spanning segment; it reads IVKVSLAFGISIATMAQSV. At 72–97 the chain is on the cytoplasmic side; it reads GHVSGAHLNPAVTLGCLLSCQISILK. The NPA 1 signature appears at 80-82; the sequence is NPA. The chain crosses the membrane as a helical span at residues 98 to 119; the sequence is AVMYIIAQCLGAVVATAILSGI. The Extracellular segment spans residues 120 to 139; that stretch reads TSGLENNSLGLNGLSPGVSA. N-linked (GlcNAc...) asparagine glycosylation occurs at Asn-125. The helical transmembrane segment at 140-160 threads the bilayer; the sequence is GQGLGVEILVTFQLVLCVVAV. Residues 161–168 lie on the Cytoplasmic side of the membrane; the sequence is TDRRRHDV. The chain crosses the membrane as a helical span at residues 169–188; sequence SGSVPLAIGLSVALGHLIAI. At 189–214 the chain is on the extracellular side; sequence DYTGCGMNPARSFGSAVLTKNFTYHW. An NPA 2 motif is present at residues 196–198; it reads NPA. The N-linked (GlcNAc...) asparagine glycan is linked to Asn-209. Residues 215-236 form a helical membrane-spanning segment; the sequence is IFWVGPMIGGAAAAIIYDFILA. Residues 237–272 are Cytoplasmic-facing; it reads PRTSDLTDRMKVWTNGQVEEYELDGDDNTRVEMKPK.

Belongs to the MIP/aquaporin (TC 1.A.8) family.

It is found in the membrane. Functionally, forms a water-specific channel. In Pelophylax lessonae (Pool frog), this protein is Aquaporin FA-CHIP (AQPA).